Consider the following 965-residue polypeptide: 26S proteasome non-ATPase regulatory subunit 1 (965 aa).

PC repeat units lie at residues 380 to 413 (NAVASLGLIHHGQESSAMKVLEPYLPKESVEGFG), 418 to 452 (GAMLAYGLIHAKHGDATAMSTLAQWLKTAENEPVR), 454 to 488 (GACLGFGVAGLGSSSVSNYEKVREVLQRDEAVSGE), 489 to 523 (SAGIAMGLIMAGHLNQEVFNELKQYTVDTQHDKTQ), 560 to 595 (TGICMLSMAYAGTGSPDVVRRLLEKVATDPNLDVKR), 630 to 664 (GAAMALGIACAGTGNMEAIALIEPMISDKEGFVRK), 665 to 706 (GALL…SLVK), and 708 to 738 (GAIIAQGLLDIGGQNAAVTMQNSDKQPDMGS). Over residues 836–856 (ASASSAAAAPSSSSTSGTAPA) the composition is skewed to low complexity. Disordered stretches follow at residues 836 to 889 (ASAS…LQNP) and 943 to 965 (TPASSGNTENKPHSTFEININDF). The segment covering 863–882 (EVDQPGKSKKEKAPEKDTKP) has biased composition (basic and acidic residues).

The protein belongs to the proteasome subunit S1 family.

Acts as a regulatory subunit of the 26 proteasome which is involved in the ATP-dependent degradation of ubiquitinated proteins. The protein is 26S proteasome non-ATPase regulatory subunit 1 (rpn-2) of Caenorhabditis elegans.